A 485-amino-acid polypeptide reads, in one-letter code: Glutamate--tRNA ligase (485 aa).

The short motif at 12–22 is the 'HIGH' region element; that stretch reads PSPTGEPHVGT. The short motif at 253-257 is the 'KMSKS' region element; sequence KLSKR. Residue K256 participates in ATP binding.

This sequence belongs to the class-I aminoacyl-tRNA synthetase family. Glutamate--tRNA ligase type 1 subfamily. As to quaternary structure, monomer.

It localises to the cytoplasm. It carries out the reaction tRNA(Glu) + L-glutamate + ATP = L-glutamyl-tRNA(Glu) + AMP + diphosphate. In terms of biological role, catalyzes the attachment of glutamate to tRNA(Glu) in a two-step reaction: glutamate is first activated by ATP to form Glu-AMP and then transferred to the acceptor end of tRNA(Glu). The sequence is that of Glutamate--tRNA ligase from Rhizobium meliloti (strain 1021) (Ensifer meliloti).